The following is a 404-amino-acid chain: L-cysteine:1D-myo-inositol 2-amino-2-deoxy-alpha-D-glucopyranoside ligase (404 aa).

The disordered stretch occupies residues 1-20 (MRTWPTPDVPPLPRTGAPAP). Cys45 serves as a coordination point for Zn(2+). L-cysteinyl-5'-AMP contacts are provided by residues 45-48 (CGIT), Thr60, and 83-85 (NVT). The short motif at 47–57 (ITPYDATHLGH) is the 'HIGH' region element. A 'ERGGDP' region motif is present at residues 185–190 (ERGGDP). The segment at 185–216 (ERGGDPDRPGKKHPLDPALWRGEQPGEPSWDG) is disordered. Residues 186-199 (RGGDPDRPGKKHPL) show a composition bias toward basic and acidic residues. Residue Trp226 coordinates L-cysteinyl-5'-AMP. Position 230 (Cys230) interacts with Zn(2+). An L-cysteinyl-5'-AMP-binding site is contributed by 248–250 (GAD). His255 serves as a coordination point for Zn(2+). Position 280 (Leu280) interacts with L-cysteinyl-5'-AMP. Residues 286 to 290 (KMSKS) carry the 'KMSKS' region motif.

It belongs to the class-I aminoacyl-tRNA synthetase family. MshC subfamily. As to quaternary structure, monomer. The cofactor is Zn(2+).

It carries out the reaction 1D-myo-inositol 2-amino-2-deoxy-alpha-D-glucopyranoside + L-cysteine + ATP = 1D-myo-inositol 2-(L-cysteinylamino)-2-deoxy-alpha-D-glucopyranoside + AMP + diphosphate + H(+). Catalyzes the ATP-dependent condensation of GlcN-Ins and L-cysteine to form L-Cys-GlcN-Ins. The polypeptide is L-cysteine:1D-myo-inositol 2-amino-2-deoxy-alpha-D-glucopyranoside ligase (Xylanimonas cellulosilytica (strain DSM 15894 / JCM 12276 / CECT 5975 / KCTC 9989 / LMG 20990 / NBRC 107835 / XIL07)).